The primary structure comprises 225 residues: ATP-dependent Clp protease proteolytic subunit (225 aa).

Residue S123 is the Nucleophile of the active site. The active site involves H148.

This sequence belongs to the peptidase S14 family. As to quaternary structure, fourteen ClpP subunits assemble into 2 heptameric rings which stack back to back to give a disk-like structure with a central cavity, resembling the structure of eukaryotic proteasomes.

It localises to the cytoplasm. The enzyme catalyses Hydrolysis of proteins to small peptides in the presence of ATP and magnesium. alpha-casein is the usual test substrate. In the absence of ATP, only oligopeptides shorter than five residues are hydrolyzed (such as succinyl-Leu-Tyr-|-NHMec, and Leu-Tyr-Leu-|-Tyr-Trp, in which cleavage of the -Tyr-|-Leu- and -Tyr-|-Trp bonds also occurs).. In terms of biological role, cleaves peptides in various proteins in a process that requires ATP hydrolysis. Has a chymotrypsin-like activity. Plays a major role in the degradation of misfolded proteins. The chain is ATP-dependent Clp protease proteolytic subunit from Chlorobaculum tepidum (strain ATCC 49652 / DSM 12025 / NBRC 103806 / TLS) (Chlorobium tepidum).